The primary structure comprises 209 residues: 2,3-bisphosphoglycerate-dependent phosphoglycerate mutase (209 aa).

Substrate contacts are provided by residues 8–15 (RHGQSEGN), 21–22 (TG), R60, 87–90 (ERDY), K98, 114–115 (RR), and 158–159 (GN). Catalysis depends on H9, which acts as the Tele-phosphohistidine intermediate. E87 serves as the catalytic Proton donor/acceptor.

Belongs to the phosphoglycerate mutase family. BPG-dependent PGAM subfamily. Homodimer.

It catalyses the reaction (2R)-2-phosphoglycerate = (2R)-3-phosphoglycerate. The protein operates within carbohydrate degradation; glycolysis; pyruvate from D-glyceraldehyde 3-phosphate: step 3/5. In terms of biological role, catalyzes the interconversion of 2-phosphoglycerate and 3-phosphoglycerate. This chain is 2,3-bisphosphoglycerate-dependent phosphoglycerate mutase, found in Rhizobium etli (strain ATCC 51251 / DSM 11541 / JCM 21823 / NBRC 15573 / CFN 42).